The chain runs to 556 residues: Glutamine--tRNA ligase (556 aa).

A 'HIGH' region motif is present at residues 35–45 (PEPNGYLHIGH). ATP-binding positions include 36–38 (EPN) and 42–48 (HIGHAKS). The L-glutamine site is built by D68 and Y213. Residues T232 and 262–263 (RL) each bind ATP. The short motif at 269–273 (VTSKR) is the 'KMSKS' region element.

It belongs to the class-I aminoacyl-tRNA synthetase family. In terms of assembly, monomer.

It is found in the cytoplasm. The enzyme catalyses tRNA(Gln) + L-glutamine + ATP = L-glutaminyl-tRNA(Gln) + AMP + diphosphate. The chain is Glutamine--tRNA ligase from Pseudomonas aeruginosa (strain ATCC 15692 / DSM 22644 / CIP 104116 / JCM 14847 / LMG 12228 / 1C / PRS 101 / PAO1).